A 749-amino-acid chain; its full sequence is MSFIDPYQHIIVEHQYSHKFTVVVLRATKVTKGAFGDMLDTPDPYVELFISTTPDSRKRTRHFNNDINPVWNETFEFILDPNQENVLEITLMDANYVMDETLGTATFTVSSMKVGEKKEVPFIFNQVTEMVLEMSLEVCSCPDLRFSMALCDQEKTFRQQRKEHIRESMKKLLGPKNSEGLHSARDVPVVAILGSGGGFRAMVGFSGVMKALYESGILDCATYVAGLSGSTWYMSTLYSHPDFPEKGPEEINEELMKNVSHNPLLLLTPQKVKRYVESLWKKKSSGQPVTFTDIFGMLIGETLIHNRMNTTLSSLKEKVNTAQCPLPLFTCLHVKPDVSELMFADWVEFSPYEIGMAKYGTFMAPDLFGSKFFMGTVVKKYEENPLHFLMGVWGSAFSILFNRVLGVSGSQSRGSTMEEELENITTKHIVSNDSSDSDDESHEPKGTENEDAGSDYQSDNQASWIHRMIMALVSDSALFNTREGRAGKVHNFMLGLNLNTSYPLSPLSDFATQDSFDDDELDAAVADPDEFERIYEPLDVKSKKIHVVDSGLTFNLPYPLILRPQRGVDLIISFDFSARPSDSSPPFKELLLAEKWAKMNKLPFPKIDPYVFDREGLKECYVFKPKNPDMEKDCPTIIHFVLANINFRKYRAPGVPRETEEEKEIADFDIFDDPESPFSTFNFQYPNQAFKRLHDLMHFNTLNNIDVIKEAMVESIEYRRQNPSRCSVSLSNVEARRFFNKEFLSKPKA.

The tract at residues 1-178 is phospholipid binding; that stretch reads MSFIDPYQHI…MKKLLGPKNS (178 aa). A Phosphoserine modification is found at serine 2. A C2 domain is found at 6–122; sequence PYQHIIVEHQ…KVGEKKEVPF (117 aa). Ca(2+)-binding residues include aspartate 40, threonine 41, aspartate 43, asparagine 65, aspartate 93, alanine 94, and asparagine 95. In terms of domain architecture, PLA2c spans 140–740; it reads SCPDLRFSMA…SNVEARRFFN (601 aa). Serine 228 functions as the Nucleophile in the catalytic mechanism. Threonine 268 carries the phosphothreonine modification. Positions 409 to 457 are disordered; the sequence is GSQSRGSTMEEELENITTKHIVSNDSSDSDDESHEPKGTENEDAGSDYQ. Serine 434, serine 435, and serine 437 each carry phosphoserine. Residue serine 505 is modified to Phosphoserine; by MAPK. Serine 515 bears the Phosphoserine mark. Lysine 541 is covalently cross-linked (Glycyl lysine isopeptide (Lys-Gly) (interchain with G-Cter in SUMO2)). Aspartate 549 (proton acceptor) is an active-site residue. Residue lysine 606 forms a Glycyl lysine isopeptide (Lys-Gly) (interchain with G-Cter in SUMO2) linkage. Phosphoserine occurs at positions 727 and 729.

As to quaternary structure, interacts with KAT5. In terms of processing, phosphorylated at both Ser-505 and Ser-727 in response to mitogenic stimuli. As to expression, expressed in various cells and tissues such as macrophages, neutrophils, fibroblasts and lung endothelium. Expressed in platelets (at protein level).

The protein localises to the cytoplasm. Its subcellular location is the golgi apparatus membrane. It is found in the nucleus envelope. The catalysed reaction is a 1,2-diacyl-sn-glycero-3-phosphocholine + H2O = a 1-acyl-sn-glycero-3-phosphocholine + a fatty acid + H(+). It carries out the reaction a 1-O-alkyl-2-acyl-sn-glycero-3-phosphocholine + H2O = a 1-O-alkyl-sn-glycero-3-phosphocholine + a fatty acid + H(+). The enzyme catalyses a 1-acyl-sn-glycero-3-phosphocholine + H2O = sn-glycerol 3-phosphocholine + a fatty acid + H(+). It catalyses the reaction 1-hexadecanoyl-2-(5Z,8Z,11Z,14Z-eicosatetraenoyl)-sn-glycero-3-phosphocholine + H2O = 1-hexadecanoyl-sn-glycero-3-phosphocholine + (5Z,8Z,11Z,14Z)-eicosatetraenoate + H(+). The catalysed reaction is 1,2-di-(5Z,8Z,11Z,14Z-eicosatetraenoyl)-sn-glycero-3-phosphocholine + H2O = 1-(5Z,8Z,11Z,14Z-eicosatetraenoyl)-sn-glycero-3-phosphocholine + (5Z,8Z,11Z,14Z)-eicosatetraenoate + H(+). It carries out the reaction 1-octadecanoyl-2-(5Z,8Z,11Z,14Z-eicosatetraenoyl)-sn-glycero-3-phosphocholine + H2O = 1-octadecanoyl-sn-glycero-3-phosphocholine + (5Z,8Z,11Z,14Z)-eicosatetraenoate + H(+). The enzyme catalyses 1-hexadecanoyl-2-(9Z,12Z-octadecadienoyl)-sn-glycero-3-phosphocholine + H2O = (9Z,12Z)-octadecadienoate + 1-hexadecanoyl-sn-glycero-3-phosphocholine + H(+). It catalyses the reaction 1-octadecanoyl-2-(9Z,12Z,15Z-octadecatrienoyl)-sn-glycero-3-phosphocholine + H2O = (9Z,12Z,15Z)-octadecatrienoate + 1-octadecanoyl-sn-glycero-3-phosphocholine + H(+). The catalysed reaction is 1-(5Z,8Z,11Z,14Z-eicosatetraenoyl)-2-hexadecanoyl-sn-glycero-3-phosphocholine + H2O = 1-(5Z,8Z,11Z,14Z-eicosatetraenoyl)-sn-glycero-3-phosphocholine + hexadecanoate + H(+). It carries out the reaction 1-O-hexadecyl-2-(5Z,8Z,11Z,14Z)-eicosatetraenoyl-sn-glycero-3-phosphocholine + H2O = 1-O-hexadecyl-sn-glycero-3-phosphocholine + (5Z,8Z,11Z,14Z)-eicosatetraenoate + H(+). The enzyme catalyses 1,2-di-(9Z-octadecenoyl)-sn-glycero-3-phospho-(1'-sn-glycerol) + H2O = 1-(9Z-octadecenoyl)-sn-glycero-3-phospho-(1'-sn-glycerol) + (9Z)-octadecenoate + H(+). It catalyses the reaction 1-octadecanoyl-2-(5Z,8Z,11Z,14Z-eicosatetraenoyl)-sn-glycero-3-phosphate + H2O = 1-octadecanoyl-sn-glycero-3-phosphate + (5Z,8Z,11Z,14Z)-eicosatetraenoate + H(+). The catalysed reaction is 1-hexadecanoyl-sn-glycero-3-phosphocholine + H2O = sn-glycerol 3-phosphocholine + hexadecanoate + H(+). It carries out the reaction 2-(prostaglandin E2)-sn-glycero-3-phosphoethanolamine + H2O = sn-glycero-3-phosphoethanolamine + prostaglandin E2 + H(+). The enzyme catalyses 2-[(15S)-hydroxy-(5Z,8Z,11Z,13E)-eicosatetraenoyl]-sn-glycero-3-phosphocholine + H2O = (15S)-hydroxy-(5Z,8Z,11Z,13E)-eicosatetraenoate + sn-glycerol 3-phosphocholine + H(+). It catalyses the reaction 2-[(15R)-hydroxy-(5Z,8Z,11Z,13E)-eicosatetraenoyl]-sn-glycero-3-phosphocholine + H2O = (15R)-hydroxy-(5Z,8Z,11Z,13E)-eicosatetraenoate + sn-glycerol 3-phosphocholine + H(+). The catalysed reaction is 2-(prostaglandin E2)-sn-glycero-3-phosphocholine + H2O = prostaglandin E2 + sn-glycerol 3-phosphocholine + H(+). It carries out the reaction 2-[(11R)-hydroxy-(5Z,8Z,12E,14Z)-eicosatetraenoyl]-sn-glycero-3-phosphocholine + H2O = (11R)-hydroxy-(5Z,8Z,12E,14Z)-eicosatetraenoate + sn-glycerol 3-phosphocholine + H(+). The enzyme catalyses 1-(5Z,8Z,11Z,14Z-eicosatetraenoyl)-2-O-hexadecyl-sn-glycero-3-phosphocholine + H2O = 2-O-hexadecyl-sn-glycero-3-phosphocholine + (5Z,8Z,11Z,14Z)-eicosatetraenoate + H(+). It catalyses the reaction 1-octadecanoyl-2-(5Z,8Z,11Z,14Z-eicosatetraenoyl)-sn-glycero-3-phosphocholine + glycerol = 1-(5Z,8Z,11Z,14Z-eicosatetraenoyl)-glycerol + 1-octadecanoyl-sn-glycero-3-phosphocholine. The catalysed reaction is 1-octadecanoyl-2-(9Z,12Z,15Z-octadecatrienoyl)-sn-glycero-3-phosphocholine + glycerol = 1-(9Z,12Z,15Z-octadecatrienoyl)-glycerol + 1-octadecanoyl-sn-glycero-3-phosphocholine. The protein operates within membrane lipid metabolism; glycerophospholipid metabolism. It participates in lipid metabolism; arachidonate metabolism. Its pathway is lipid metabolism; prostaglandin biosynthesis. It functions in the pathway lipid metabolism; leukotriene B4 biosynthesis. With respect to regulation, activated by cytosolic calcium, which is necessary for binding to membrane lipids. Activated by phosphorylation in response to mitogenic stimuli. Activated by ceramide-1-phosphate. Binding (via C2 domain) to ceramide-1-phosphate increases the affinity for membrane lipids. Can be activated by phosphoinositides in the absence of calcium. Inhibited by ANXA5 in a calcium- and substrate-dependent way. In terms of biological role, has primarily calcium-dependent phospholipase and lysophospholipase activities, with a major role in membrane lipid remodeling and biosynthesis of lipid mediators of the inflammatory response. Plays an important role in embryo implantation and parturition through its ability to trigger prostanoid production. Preferentially hydrolyzes the ester bond of the fatty acyl group attached at sn-2 position of phospholipids (phospholipase A2 activity). Selectively hydrolyzes sn-2 arachidonoyl group from membrane phospholipids, providing the precursor for eicosanoid biosynthesis via the cyclooxygenase pathway. In an alternative pathway of eicosanoid biosynthesis, hydrolyzes sn-2 fatty acyl chain of eicosanoid lysophopholipids to release free bioactive eicosanoids. Hydrolyzes the ester bond of the fatty acyl group attached at sn-1 position of phospholipids (phospholipase A1 activity) only if an ether linkage rather than an ester linkage is present at the sn-2 position. This hydrolysis is not stereospecific. Has calcium-independent phospholipase A2 and lysophospholipase activities in the presence of phosphoinositides. Has O-acyltransferase activity. Catalyzes the transfer of fatty acyl chains from phospholipids to a primary hydroxyl group of glycerol (sn-1 or sn-3), potentially contributing to monoacylglycerol synthesis. In Homo sapiens (Human), this protein is Cytosolic phospholipase A2 (PLA2G4A).